Reading from the N-terminus, the 173-residue chain is Adenine phosphoribosyltransferase (173 aa).

It belongs to the purine/pyrimidine phosphoribosyltransferase family. As to quaternary structure, homodimer.

It localises to the cytoplasm. It catalyses the reaction AMP + diphosphate = 5-phospho-alpha-D-ribose 1-diphosphate + adenine. It participates in purine metabolism; AMP biosynthesis via salvage pathway; AMP from adenine: step 1/1. Its function is as follows. Catalyzes a salvage reaction resulting in the formation of AMP, that is energically less costly than de novo synthesis. The polypeptide is Adenine phosphoribosyltransferase (Macrococcus caseolyticus (strain JCSC5402) (Macrococcoides caseolyticum)).